Consider the following 226-residue polypeptide: ATP-dependent Clp protease proteolytic subunit 4 (226 aa).

The active-site Nucleophile is serine 122. Histidine 147 is a catalytic residue.

The protein belongs to the peptidase S14 family. In terms of assembly, fourteen ClpP subunits assemble into 2 heptameric rings which stack back to back to give a disk-like structure with a central cavity, resembling the structure of eukaryotic proteasomes.

It localises to the cytoplasm. It catalyses the reaction Hydrolysis of proteins to small peptides in the presence of ATP and magnesium. alpha-casein is the usual test substrate. In the absence of ATP, only oligopeptides shorter than five residues are hydrolyzed (such as succinyl-Leu-Tyr-|-NHMec, and Leu-Tyr-Leu-|-Tyr-Trp, in which cleavage of the -Tyr-|-Leu- and -Tyr-|-Trp bonds also occurs).. Functionally, cleaves peptides in various proteins in a process that requires ATP hydrolysis. Has a chymotrypsin-like activity. Plays a major role in the degradation of misfolded proteins. This chain is ATP-dependent Clp protease proteolytic subunit 4, found in Streptomyces avermitilis (strain ATCC 31267 / DSM 46492 / JCM 5070 / NBRC 14893 / NCIMB 12804 / NRRL 8165 / MA-4680).